A 360-amino-acid polypeptide reads, in one-letter code: Photosystem II protein D1 1 (360 aa).

3 helical membrane passes run 29–46 (YVGW…SATI), 118–133 (HFLI…EWEL), and 142–156 (WICI…AAAA). Chlorophyll a is bound at residue histidine 118. Tyrosine 126 lines the pheophytin a pocket. 2 residues coordinate [CaMn4O5] cluster: aspartate 170 and glutamate 189. The chain crosses the membrane as a helical span at residues 197–218 (FHMLGVAGVFGGSLFSAMHGSL). Histidine 198 contributes to the chlorophyll a binding site. A quinone-binding positions include histidine 215 and 264–265 (SF). Histidine 215 serves as a coordination point for Fe cation. Fe cation is bound at residue histidine 272. Residues 274–288 (FLAAWPVIGIWFTAL) form a helical membrane-spanning segment. Positions 332, 333, 342, and 344 each coordinate [CaMn4O5] cluster. Residues 345-360 (GTESAPVAVGNADLNG) constitute a propeptide that is removed on maturation.

The protein belongs to the reaction center PufL/M/PsbA/D family. As to quaternary structure, PSII is composed of 1 copy each of membrane proteins PsbA, PsbB, PsbC, PsbD, PsbE, PsbF, PsbH, PsbI, PsbJ, PsbK, PsbL, PsbM, PsbT, PsbX, Psb30/Ycf12, peripheral proteins PsbO, CyanoQ (PsbQ), PsbU, PsbV and a large number of cofactors. It forms dimeric complexes. Requires The D1/D2 heterodimer binds P680, chlorophylls that are the primary electron donor of PSII, and subsequent electron acceptors. It shares a non-heme iron and each subunit binds pheophytin, quinone, additional chlorophylls, carotenoids and lipids. D1 provides most of the ligands for the Mn4-Ca-O5 cluster of the oxygen-evolving complex (OEC). There is also a Cl(-1) ion associated with D1 and D2, which is required for oxygen evolution. The PSII complex binds additional chlorophylls, carotenoids and specific lipids. as cofactor. Tyr-161 forms a radical intermediate that is referred to as redox-active TyrZ, YZ or Y-Z. Post-translationally, C-terminally processed by CtpA; processing is essential to allow assembly of the oxygen-evolving complex and thus photosynthetic growth.

It is found in the cell inner membrane. The enzyme catalyses 2 a plastoquinone + 4 hnu + 2 H2O = 2 a plastoquinol + O2. Its function is as follows. Photosystem II (PSII) is a light-driven water:plastoquinone oxidoreductase that uses light energy to abstract electrons from H(2)O, generating O(2) and a proton gradient subsequently used for ATP formation. It consists of a core antenna complex that captures photons, and an electron transfer chain that converts photonic excitation into a charge separation. The D1/D2 (PsbA/PsbD) reaction center heterodimer binds P680, the primary electron donor of PSII as well as several subsequent electron acceptors. This is Photosystem II protein D1 1 from Gloeobacter violaceus (strain ATCC 29082 / PCC 7421).